A 55-amino-acid chain; its full sequence is MAKQQDVRPIIKLRSTAGTGYTYVTRKNRRNNPDRLVLKKYDPVVRKHVDFREER.

The protein belongs to the bacterial ribosomal protein bL33 family.

The sequence is that of Large ribosomal subunit protein bL33 from Leifsonia xyli subsp. xyli (strain CTCB07).